A 268-amino-acid polypeptide reads, in one-letter code: Undecaprenyl-diphosphatase (268 aa).

Helical transmembrane passes span 43–63, 83–103, 109–129, 144–164, 184–204, 218–238, and 246–266; these read FWNTFTVLIQLGAILAIVVIY, FVIGVLAAFLPAVVVGLIAGK, LFNPWVVCFSLIVGGAVLMWV, FPLPMYIWIGIAQCLAMIPGV, AAEFSFFLAIPTMIGAFAYDF, IVAIGFVVSFVTAIVVVKAFL, and FTFFAWWRVIVGTLGLIALAL.

It belongs to the UppP family.

The protein resides in the cell inner membrane. The catalysed reaction is di-trans,octa-cis-undecaprenyl diphosphate + H2O = di-trans,octa-cis-undecaprenyl phosphate + phosphate + H(+). Catalyzes the dephosphorylation of undecaprenyl diphosphate (UPP). Confers resistance to bacitracin. This is Undecaprenyl-diphosphatase from Nitrobacter hamburgensis (strain DSM 10229 / NCIMB 13809 / X14).